A 179-amino-acid polypeptide reads, in one-letter code: Ribosome maturation factor RimM (179 aa).

In terms of domain architecture, PRC barrel spans 102-179 (DGEYYWYQLE…EMKVEWDADF (78 aa)).

It belongs to the RimM family. As to quaternary structure, binds ribosomal protein uS19.

The protein localises to the cytoplasm. Functionally, an accessory protein needed during the final step in the assembly of 30S ribosomal subunit, possibly for assembly of the head region. Essential for efficient processing of 16S rRNA. May be needed both before and after RbfA during the maturation of 16S rRNA. It has affinity for free ribosomal 30S subunits but not for 70S ribosomes. The polypeptide is Ribosome maturation factor RimM (Pseudomonas syringae pv. tomato (strain ATCC BAA-871 / DC3000)).